The chain runs to 332 residues: Tetraacyldisaccharide 4'-kinase (332 aa).

Thr-52–Thr-59 contributes to the ATP binding site.

It belongs to the LpxK family.

It catalyses the reaction a lipid A disaccharide + ATP = a lipid IVA + ADP + H(+). It functions in the pathway glycolipid biosynthesis; lipid IV(A) biosynthesis; lipid IV(A) from (3R)-3-hydroxytetradecanoyl-[acyl-carrier-protein] and UDP-N-acetyl-alpha-D-glucosamine: step 6/6. Its function is as follows. Transfers the gamma-phosphate of ATP to the 4'-position of a tetraacyldisaccharide 1-phosphate intermediate (termed DS-1-P) to form tetraacyldisaccharide 1,4'-bis-phosphate (lipid IVA). In Methylobacterium sp. (strain 4-46), this protein is Tetraacyldisaccharide 4'-kinase.